The primary structure comprises 204 residues: Leucyl/phenylalanyl-tRNA--protein transferase (204 aa).

The protein belongs to the L/F-transferase family.

It localises to the cytoplasm. The enzyme catalyses N-terminal L-lysyl-[protein] + L-leucyl-tRNA(Leu) = N-terminal L-leucyl-L-lysyl-[protein] + tRNA(Leu) + H(+). It carries out the reaction N-terminal L-arginyl-[protein] + L-leucyl-tRNA(Leu) = N-terminal L-leucyl-L-arginyl-[protein] + tRNA(Leu) + H(+). The catalysed reaction is L-phenylalanyl-tRNA(Phe) + an N-terminal L-alpha-aminoacyl-[protein] = an N-terminal L-phenylalanyl-L-alpha-aminoacyl-[protein] + tRNA(Phe). Functions in the N-end rule pathway of protein degradation where it conjugates Leu, Phe and, less efficiently, Met from aminoacyl-tRNAs to the N-termini of proteins containing an N-terminal arginine or lysine. This is Leucyl/phenylalanyl-tRNA--protein transferase from Rhizobium etli (strain ATCC 51251 / DSM 11541 / JCM 21823 / NBRC 15573 / CFN 42).